The chain runs to 156 residues: uncharacterized protein (156 aa).

His55 is a catalytic residue.

This sequence belongs to the thioester dehydratase family. FabZ subfamily.

This is an uncharacterized protein from Halalkalibacterium halodurans (strain ATCC BAA-125 / DSM 18197 / FERM 7344 / JCM 9153 / C-125) (Bacillus halodurans).